The sequence spans 416 residues: Squamosa promoter-binding-like protein 8 (416 aa).

A disordered region spans residues 11 to 51; it reads SSCDDFGYNATPPPPPSLLPIMDQDGGGGSIQRDHHQHHNH. An SBP-type zinc finger spans residues 182–260; that stretch reads PPRCQAEGCK…ADHNRRRRKS (79 aa). Cysteine 185, cysteine 190, cysteine 207, histidine 210, cysteine 227, cysteine 230, histidine 234, and cysteine 246 together coordinate Zn(2+). Positions 243 to 259 match the Bipartite nuclear localization signal motif; sequence KKSCRKRLADHNRRRRK. The disordered stretch occupies residues 250-299; it reads LADHNRRRRKSKPSDGEHSGEKRRAQANKSAATKDKAGSSSKNAGIGDGF. Residues 261–273 are compositionally biased toward basic and acidic residues; that stretch reads KPSDGEHSGEKRR.

As to expression, expressed in stems, leaf sheaths, and young panicles. Weakly expressed in ligules, auricles, and leaf sheaths at the basal region.

It is found in the nucleus. Functionally, probable transcription factor that plays an important role in building the laminar joint between leaf blade and leaf sheath boundary, thereby controlling ligule and auricle development. The sequence is that of Squamosa promoter-binding-like protein 8 (SPL8) from Oryza sativa subsp. japonica (Rice).